Here is a 200-residue protein sequence, read N- to C-terminus: uncharacterized protein (200 aa).

This is an uncharacterized protein from Ostreid herpesvirus 1 (isolate France) (OsHV-1).